The primary structure comprises 356 residues: Arginine kinase Lit v 2 (356 aa).

The Phosphagen kinase N-terminal domain occupies 9-91; the sequence is KLEAGFKKLE…FDPIIEDYHV (83 aa). Position 64-68 (64-68) interacts with L-arginine; the sequence is GVGIY. One can recognise a Phosphagen kinase C-terminal domain in the interval 119 to 356; sequence FVISTRVRCG…LELIKMEKEM (238 aa). Residues 122-126 and histidine 185 contribute to the ATP site; that span reads STRVR. An L-arginine-binding site is contributed by glutamate 225. Position 229 (arginine 229) interacts with ATP. Cysteine 271 is a binding site for L-arginine. Residues 280 to 284 and 309 to 314 each bind ATP; these read RASVH and RGTRGE. Glutamate 314 serves as a coordination point for L-arginine.

Belongs to the ATP:guanido phosphotransferase family. As to expression, expressed in muscle (at protein level). Expressed in muscle, heart, nerve, stomach and hemocytes, with the highest expression in muscle. Very low expression in eyestalk and intestine. Not expressed in hepatopancreas, gill and skin.

It carries out the reaction L-arginine + ATP = N(omega)-phospho-L-arginine + ADP + H(+). With respect to regulation, no change in activity after supplementation with 10 mM glucose. However, activity decreases significantly when glucose concentration is higher than 50 mM and almost all activity is lost with 200 mM glucose. Activity is significantly increased after treatment with 10 mM and 50 mM ATP. However, activity drops significantly with 200 mM ATP. Inhibited by 10-200 mM alpha-ketoglutarate. No change in activity after incubation with 10-200 mM L-citrulline, L-ornaline or glycerol. In terms of biological role, catalyzes the reversible transfer of high energy ATP gamma-phosphate group to L-arginine. In Penaeus vannamei (Whiteleg shrimp), this protein is Arginine kinase Lit v 2.